Reading from the N-terminus, the 768-residue chain is Phosphoribosylformylglycinamidine synthase subunit PurL (768 aa).

Histidine 46 is a catalytic residue. Residues tyrosine 49 and lysine 88 each coordinate ATP. Position 90 (glutamate 90) interacts with Mg(2+). Residues 91 to 94 and arginine 113 each bind substrate; that span reads SHNH. Histidine 92 acts as the Proton acceptor in catalysis. Aspartate 114 lines the Mg(2+) pocket. Substrate is bound at residue glutamine 237. Aspartate 265 is a Mg(2+) binding site. Residue 309–311 coordinates substrate; it reads ESQ. ATP is bound by residues aspartate 514 and glycine 551. Residue asparagine 552 coordinates Mg(2+). Serine 554 is a binding site for substrate.

Belongs to the FGAMS family. In terms of assembly, monomer. Part of the FGAM synthase complex composed of 1 PurL, 1 PurQ and 2 PurS subunits.

The protein resides in the cytoplasm. The enzyme catalyses N(2)-formyl-N(1)-(5-phospho-beta-D-ribosyl)glycinamide + L-glutamine + ATP + H2O = 2-formamido-N(1)-(5-O-phospho-beta-D-ribosyl)acetamidine + L-glutamate + ADP + phosphate + H(+). It participates in purine metabolism; IMP biosynthesis via de novo pathway; 5-amino-1-(5-phospho-D-ribosyl)imidazole from N(2)-formyl-N(1)-(5-phospho-D-ribosyl)glycinamide: step 1/2. Its function is as follows. Part of the phosphoribosylformylglycinamidine synthase complex involved in the purines biosynthetic pathway. Catalyzes the ATP-dependent conversion of formylglycinamide ribonucleotide (FGAR) and glutamine to yield formylglycinamidine ribonucleotide (FGAM) and glutamate. The FGAM synthase complex is composed of three subunits. PurQ produces an ammonia molecule by converting glutamine to glutamate. PurL transfers the ammonia molecule to FGAR to form FGAM in an ATP-dependent manner. PurS interacts with PurQ and PurL and is thought to assist in the transfer of the ammonia molecule from PurQ to PurL. This chain is Phosphoribosylformylglycinamidine synthase subunit PurL, found in Synechocystis sp. (strain ATCC 27184 / PCC 6803 / Kazusa).